The following is a 465-amino-acid chain: Ribulose bisphosphate carboxylase large chain (465 aa).

N6,N6,N6-trimethyllysine is present on Lys-4. Residues Asn-113 and Thr-163 each contribute to the substrate site. The active-site Proton acceptor is the Lys-165. Lys-167 contributes to the substrate binding site. Positions 191, 193, and 194 each coordinate Mg(2+). Lys-191 carries the post-translational modification N6-carboxylysine. His-284 functions as the Proton acceptor in the catalytic mechanism. Residues Arg-285, His-317, and Ser-369 each contribute to the substrate site.

Belongs to the RuBisCO large chain family. Type I subfamily. Heterohexadecamer of 8 large chains and 8 small chains; disulfide-linked. The disulfide link is formed within the large subunit homodimers. Mg(2+) is required as a cofactor. In terms of processing, the disulfide bond which can form in the large chain dimeric partners within the hexadecamer appears to be associated with oxidative stress and protein turnover.

Its subcellular location is the plastid. The protein localises to the chloroplast. The enzyme catalyses 2 (2R)-3-phosphoglycerate + 2 H(+) = D-ribulose 1,5-bisphosphate + CO2 + H2O. It carries out the reaction D-ribulose 1,5-bisphosphate + O2 = 2-phosphoglycolate + (2R)-3-phosphoglycerate + 2 H(+). RuBisCO catalyzes two reactions: the carboxylation of D-ribulose 1,5-bisphosphate, the primary event in carbon dioxide fixation, as well as the oxidative fragmentation of the pentose substrate in the photorespiration process. Both reactions occur simultaneously and in competition at the same active site. The polypeptide is Ribulose bisphosphate carboxylase large chain (Cassia fistula (Golden shower tree)).